Here is a 104-residue protein sequence, read N- to C-terminus: L-rhamnose mutarotase (104 aa).

Substrate is bound at residue Tyr18. The active-site Proton donor is the His22. Substrate is bound by residues Tyr41 and 76–77 (WW).

This sequence belongs to the rhamnose mutarotase family. Homodimer.

The protein resides in the cytoplasm. It catalyses the reaction alpha-L-rhamnose = beta-L-rhamnose. The protein operates within carbohydrate metabolism; L-rhamnose metabolism. Its function is as follows. Involved in the anomeric conversion of L-rhamnose. The sequence is that of L-rhamnose mutarotase from Bacillus subtilis (strain 168).